A 189-amino-acid polypeptide reads, in one-letter code: High affinity copper uptake protein 1 (189 aa).

At methionine 1–glutamate 67 the chain is on the extracellular side. The Methionine segments (Mets) motif motif lies at methionine 13–methionine 18. The interval methionine 15–serine 36 is disordered. Positions histidine 20–serine 36 are enriched in low complexity. The helical transmembrane segment at methionine 68–alanine 88 threads the bilayer. The Cytoplasmic portion of the chain corresponds to arginine 89–histidine 131. A Phosphothreonine modification is found at threonine 113. Residues leucine 132–phenylalanine 152 traverse the membrane as a helical segment. Residues methionine 153–tyrosine 155 are Extracellular-facing. A helical membrane pass occupies residues asparagine 156–tryptophan 176. The Cytoplasmic portion of the chain corresponds to lysine 177–histidine 189. Cysteine 188 carries the cysteine sulfenic acid (-SOH) modification.

It belongs to the copper transporter (Ctr) (TC 1.A.56) family. SLC31A subfamily. In terms of assembly, homotrimer; is stabilized by cisplatin via interactions between cisplatin and the methionine-rich clusters, and could be crucial for the copper(2+) reduction process and copper(1+) stabilization. Heterotrimer between SLC31A1, CCS and SOD1; this heterotrimer is copper(1+)-mediated and its maintenance is regulated through SOD1 activation. Interacts with KDR; this interaction is induced upon VEGFA stimulation leading to SLC31A1 and KDR subsequent co-internalization to early endosomes, thereby activating KDR downstream signaling in endothelial cells. Interacts (via C-terminal domain) with ATOX1 (via dimer form); this interaction improves ATOX1 stability and controls intracellular copper(1+) levels. Interacts with SLC31A2; this interaction stabilizes SLC31A2 and protects its from ubiquitination and degradation. Interacts (via C-terminal domain) with CCS; this interaction is copper(1+)-mediated. Post-translationally, proteolytic cleavage, leading to a truncated form, is facilitated by SLC31A2 and initiated preferentially by CTSL and to a minor extend by CTSB in endolysosomal compartments. A post-CTSL/cathepsin L processing occurs to yield to the fully truncated form. In terms of processing, sulfenylated at Cys-188 after stimulation with VEGFA, which induces SLC31A1-KDR disulfide bond formation and their co-internalization to early endosomes, driving to a sustained VEGFR2 signaling.

Its subcellular location is the cell membrane. It localises to the early endosome membrane. The protein resides in the recycling endosome membrane. It is found in the apical cell membrane. The protein localises to the late endosome membrane. Its subcellular location is the basolateral cell membrane. The catalysed reaction is Ag(+)(out) = Ag(+)(in). It catalyses the reaction Cu(+)(out) = Cu(+)(in). Uniporter that mediates the transport of copper(1+) from the extracellular space to the cytoplasm, across the plasma membrane and delivers directly copper(1+) to specific chaperone such as ATOX1, via a copper(1+)- mediated transient interaction between the C-terminal domain and a copper(1+) chaperone, thus controlling intracellular copper(1+) levels. May function in copper(1+) import from the apical membrane thus may drive intestinal copper absorption. The copper(1+) transport mechanism is sodium-independent, saturable and of high-affinity. Also mediates the uptake of silver(1+). May function in the influx of the platinum-containing chemotherapeutic agents. The platinum-containing chemotherapeutic agents uptake is saturable. In vitro, mediates the transport of cadmium(2+) into cells. Also participates in the first step of copper(2+) acquisition by cells through a direct transfer of copper(2+) from copper(2+) carriers in blood, such as ALB to the N-terminal domain of SLC31A1, leading to copper(2+) reduction and probably followed by copper(1+) stabilization. In addition, functions as a redox sensor to promote angiogenesis in endothelial cells, in a copper(1+) transport independent manner, by transmitting the VEGF-induced ROS signal through a sulfenylation at Cys-189 leadin g to a subsequent disulfide bond formation between SLC31A1 and KDR. The SLC31A1-KDR complex is then co-internalized to early endosomes, driving a sustained VEGFR2 signaling. Its function is as follows. Mobilizes copper(1+) out of the endosomal compartment, making copper(1+) available for export out of the cells. The protein is High affinity copper uptake protein 1 of Sus scrofa (Pig).